Here is an 80-residue protein sequence, read N- to C-terminus: Small ribosomal subunit protein uS17 (80 aa).

Belongs to the universal ribosomal protein uS17 family. In terms of assembly, part of the 30S ribosomal subunit.

Its function is as follows. One of the primary rRNA binding proteins, it binds specifically to the 5'-end of 16S ribosomal RNA. The sequence is that of Small ribosomal subunit protein uS17 from Microcystis aeruginosa (strain NIES-843 / IAM M-2473).